We begin with the raw amino-acid sequence, 249 residues long: uncharacterized protein (249 aa).

A helical transmembrane segment spans residues 3–23; that stretch reads WYWIGLLIVVVLFLLSAVRIV.

The protein belongs to the band 7/mec-2 family.

It is found in the membrane. This is an uncharacterized protein from Archaeoglobus fulgidus (strain ATCC 49558 / DSM 4304 / JCM 9628 / NBRC 100126 / VC-16).